A 436-amino-acid polypeptide reads, in one-letter code: GTPase Der (436 aa).

EngA-type G domains lie at 4 to 167 and 176 to 351; these read PTIA…PEQQ and IKFS…ENHR. Residues 10 to 17, 57 to 61, 119 to 122, 182 to 189, 229 to 233, and 294 to 297 each bind GTP; these read GRANVGKS, DTGGI, NKID, GRPNVGKS, DTAGM, and NKWD. The KH-like domain maps to 352-436; that stretch reads KRVQSSTLNE…PLHLIARKRN (85 aa).

It belongs to the TRAFAC class TrmE-Era-EngA-EngB-Septin-like GTPase superfamily. EngA (Der) GTPase family. In terms of assembly, associates with the 50S ribosomal subunit.

Functionally, GTPase that plays an essential role in the late steps of ribosome biogenesis. In Macrococcus caseolyticus (strain JCSC5402) (Macrococcoides caseolyticum), this protein is GTPase Der.